The primary structure comprises 415 residues: Phakinin (415 aa).

Residues 1–26 (MSTRRVVVDAPAGASSSMPLQRHKAS) form a disordered region. Ser2 bears the N-acetylserine mark. The interval 2 to 114 (STRRVVVDAP…LGAVEDLGGC (113 aa)) is head. Ser26, Ser32, and Ser35 each carry phosphoserine. Thr53 carries the phosphothreonine modification. Phosphoserine is present on residues Ser90 and Ser100. Residues 104 to 415 (DLGAVEDLGG…HALLDREESS (312 aa)) form the IF rod domain. Coiled coils occupy residues 115–144 (LVEYMAKVHALEKVSQELEAQLRMHLESKA), 199–248 (RKAA…VKML), and 295–395 (QAKQ…LSHK). The segment at 396–415 (CQLQRDVASYHALLDREESS) is tail.

It belongs to the intermediate filament family. As to quaternary structure, part of a complex required for lens intermediate filament formation composed of BFSP1, BFSP2 and CRYAA. Found in a complex composed of PPL (via C-terminal linker domain), BFSP1 and BFSP2 in the retinal lens. Within the complex interacts with PPL (via C-terminal linker domain) and with BFSP1. Identified in a complex that contains VIM, EZR, AHNAK, BFSP1, BFSP2, ANK2, PLEC, PRX and spectrin. Interacts with LGSN. Interacts with VIM. Abundantly expressed in both the inner and outer cortex of the retina, expressed at a lower level in the nucleus of the retina (at protein level). Detected in eye lens fiber cells (at protein level).

The protein resides in the cell membrane. The protein localises to the cytoplasm. It localises to the cytoskeleton. It is found in the cell cortex. In terms of biological role, required for the correct formation of lens intermediate filaments as part of a complex composed of BFSP1, BFSP2 and CRYAA. Plays a role in maintenance of retinal lens optical clarity. The sequence is that of Phakinin (BFSP2) from Bos taurus (Bovine).